A 144-amino-acid polypeptide reads, in one-letter code: Putative pre-16S rRNA nuclease (144 aa).

It belongs to the YqgF nuclease family.

The protein localises to the cytoplasm. Could be a nuclease involved in processing of the 5'-end of pre-16S rRNA. The polypeptide is Putative pre-16S rRNA nuclease (Pseudomonas aeruginosa (strain LESB58)).